Consider the following 967-residue polypeptide: Putative helicase MOV-10 (967 aa).

The disordered stretch occupies residues 85–117 (ADQYRRPRTDTEVSAPAPGQQPSSGPPAPQSRA). Low complexity predominate over residues 98 to 107 (SAPAPGQQPS). Residue 516 to 523 (GPPGTGKT) participates in ATP binding. A DEAG box motif is present at residues 638 to 641 (DECG).

Belongs to the DNA2/NAM7 helicase family. SDE3 subfamily.

Its subcellular location is the cytoplasm. The protein resides in the P-body. It is found in the cytoplasmic ribonucleoprotein granule. It localises to the stress granule. The protein localises to the nucleus. It carries out the reaction ATP + H2O = ADP + phosphate + H(+). Its function is as follows. 5' to 3' RNA helicase that is involved in a number of cellular roles ranging from mRNA metabolism and translation, modulation of viral infectivity, inhibition of retrotransposition, or regulation of synaptic transmission. Plays an important role in innate antiviral immunity by promoting type I interferon production. Required for microRNA (miRNA)-mediated gene silencing by the RNA-induced silencing complex (RISC). Required for both miRNA-mediated translational repression and miRNA-mediated cleavage of complementary mRNAs by RISC. In cooperation with FMR1, regulates miRNA-mediated translational repression by AGO2. Restricts retrotransposition of long interspersed element-1 (LINE-1). Required for embryonic viability and for normal central nervous system development and function. May function as a messenger ribonucleoprotein (mRNP) clearance factor. This is Putative helicase MOV-10 (MOV10) from Gallus gallus (Chicken).